A 324-amino-acid chain; its full sequence is Beta-ketoacyl-[acyl-carrier-protein] synthase III (324 aa).

Catalysis depends on residues C112 and H249. Positions 250–254 are ACP-binding; that stretch reads QANRR. Residue N279 is part of the active site.

It belongs to the thiolase-like superfamily. FabH family. Homodimer.

The protein localises to the cytoplasm. It catalyses the reaction malonyl-[ACP] + acetyl-CoA + H(+) = 3-oxobutanoyl-[ACP] + CO2 + CoA. It functions in the pathway lipid metabolism; fatty acid biosynthesis. Catalyzes the condensation reaction of fatty acid synthesis by the addition to an acyl acceptor of two carbons from malonyl-ACP. Catalyzes the first condensation reaction which initiates fatty acid synthesis and may therefore play a role in governing the total rate of fatty acid production. Possesses both acetoacetyl-ACP synthase and acetyl transacylase activities. Its substrate specificity determines the biosynthesis of branched-chain and/or straight-chain of fatty acids. In Streptococcus pyogenes serotype M1, this protein is Beta-ketoacyl-[acyl-carrier-protein] synthase III.